Reading from the N-terminus, the 1263-residue chain is Histone-lysine N-methyltransferase EHMT2 (1263 aa).

Disordered regions lie at residues 1–314 (MRGL…LEEW) and 332–439 (DERV…EYME). A compositionally biased stretch (basic residues) spans 26–39 (GRGRGGAHRGRGRP). At Arg-40 the chain carries Asymmetric dimethylarginine. Basic and acidic residues predominate over residues 83-95 (LEKEPRGAAERVH). Ser-97 carries the phosphoserine modification. A Phosphothreonine modification is found at Thr-101. A phosphoserine mark is found at Ser-104 and Ser-193. Lys-239 bears the N6,N6,N6-trimethyllysine; by EHMT2; alternate mark. Lys-239 is modified (N6,N6-dimethyllysine; by EHMT2; alternate). Over residues 252–270 (PEKRPPEVQHFRMSDDMHL) the composition is skewed to basic and acidic residues. Residues Lys-272 and Lys-282 each participate in a glycyl lysine isopeptide (Lys-Gly) (interchain with G-Cter in SUMO2) cross-link. 3 positions are modified to phosphoserine: Ser-285, Ser-294, and Ser-298. 2 stretches are compositionally biased toward basic and acidic residues: residues 302–312 (ILEKGEPRPLE) and 332–343 (DERVDSDSKSEV). The segment covering 350–380 (LSEEEEEEEEEEEEEEEEEEEEEEEEEDEES) has biased composition (acidic residues). Residues 391–400 (GRRKAKKKWR) show a composition bias toward basic residues. Ser-403, Ser-465, and Ser-466 each carry phosphoserine. The residue at position 608 (Thr-608) is a Phosphothreonine. The tract at residues 621–647 (LAHDAPGRADTSQPSARMRGHGEPRRP) is disordered. A Glycyl lysine isopeptide (Lys-Gly) (interchain with G-Cter in SUMO2) cross-link involves residue Lys-687. ANK repeat units follow at residues 702 to 731 (FHPR…DPNF), 737 to 766 (SKRT…NINA), 770 to 799 (QQRT…CVYS), 803 to 833 (DGST…DVNA), 837 to 866 (GGWT…DVTL), 870 to 899 (EENI…DLHA), and 903 to 932 (HGDT…NPEL). A histone H3K9me binding region spans residues 870–872 (EEN). The Pre-SET domain occupies 1025-1088 (QHCTCVDDCS…SCKNRVVQSG (64 aa)). Zn(2+) contacts are provided by Cys-1027, Cys-1029, Cys-1033, Cys-1038, Cys-1040, Cys-1070, Cys-1074, Cys-1076, and Cys-1080. The SET domain occupies 1091–1208 (VRLQLYRTAK…TGEELGFDYG (118 aa)). S-adenosyl-L-methionine-binding positions include 1101-1103 (MGW), Tyr-1138, and 1165-1166 (NH). Residues 1127-1146 (DAEADVREDDSYLFDLDNKD) are interaction with histone H3. Cys-1168 serves as a coordination point for Zn(2+). The interaction with histone H3 stretch occupies residues 1207 to 1210 (YGDR). The Post-SET domain maps to 1217 to 1233 (KYFTCQCGSEKCKHSAE). The Zn(2+) site is built by Cys-1221, Cys-1223, and Cys-1228. Ser-1257 is modified (phosphoserine). Residue Thr-1263 is modified to Phosphothreonine.

This sequence belongs to the class V-like SAM-binding methyltransferase superfamily. Histone-lysine methyltransferase family. Suvar3-9 subfamily. As to quaternary structure, heterodimer; heterodimerizes with EHMT1/GLP. Interacts with GFI1B and WIZ. Part of the E2F6.com-1 complex in G0 phase composed of E2F6, MGA, MAX, TFDP1, CBX3, BAT8, EHMT1, RING1, RNF2, MBLR, L3MBTL2 and YAF2. Part of a complex composed of TRIM28, HDAC1, HDAC2 and EHMT2. Interacts with UHRF1. Interacts with CDYL. Interacts with REST only in the presence of CDYL. Part of a complex containing at least CDYL, REST, WIZ, SETB1, EHMT1 and EHMT2. Interacts with PRDM9 and CDYL; interaction only takes place when PRDM9 is bound to hotspot DNA. Interacts with SMYD5. In terms of processing, methylated at Lys-239; automethylated. In terms of tissue distribution, ubiquitous.

It localises to the nucleus. It is found in the chromosome. It catalyses the reaction N(6)-methyl-L-lysyl(9)-[histone H3] + S-adenosyl-L-methionine = N(6),N(6)-dimethyl-L-lysyl(9)-[histone H3] + S-adenosyl-L-homocysteine + H(+). The catalysed reaction is L-lysyl(9)-[histone H3] + S-adenosyl-L-methionine = N(6)-methyl-L-lysyl(9)-[histone H3] + S-adenosyl-L-homocysteine + H(+). In terms of biological role, histone methyltransferase that specifically mono- and dimethylates 'Lys-9' of histone H3 (H3K9me1 and H3K9me2, respectively) in euchromatin. H3K9me represents a specific tag for epigenetic transcriptional repression by recruiting HP1 proteins to methylated histones. Also mediates monomethylation of 'Lys-56' of histone H3 (H3K56me1) in G1 phase, leading to promote interaction between histone H3 and PCNA and regulating DNA replication. Also weakly methylates 'Lys-27' of histone H3 (H3K27me). Also required for DNA methylation, the histone methyltransferase activity is not required for DNA methylation, suggesting that these 2 activities function independently. Probably targeted to histone H3 by different DNA-binding proteins like E2F6, MGA, MAX and/or DP1. May also methylate histone H1. In addition to the histone methyltransferase activity, also methylates non-histone proteins: mediates dimethylation of 'Lys-373' of p53/TP53. Also methylates CDYL, WIZ, ACIN1, DNMT1, HDAC1, ERCC6, KLF12 and itself. The chain is Histone-lysine N-methyltransferase EHMT2 (Ehmt2) from Mus musculus (Mouse).